Consider the following 344-residue polypeptide: tRNA N6-adenosine threonylcarbamoyltransferase (344 aa).

Fe cation is bound by residues His110 and His114. Residues 133-137 (AVSGA), Asp166, Gly179, and Asn278 each bind substrate. Asp303 contacts Fe cation.

Belongs to the KAE1 / TsaD family. It depends on Fe(2+) as a cofactor.

It localises to the cytoplasm. The enzyme catalyses L-threonylcarbamoyladenylate + adenosine(37) in tRNA = N(6)-L-threonylcarbamoyladenosine(37) in tRNA + AMP + H(+). Functionally, required for the formation of a threonylcarbamoyl group on adenosine at position 37 (t(6)A37) in tRNAs that read codons beginning with adenine. Is involved in the transfer of the threonylcarbamoyl moiety of threonylcarbamoyl-AMP (TC-AMP) to the N6 group of A37, together with TsaE and TsaB. TsaD likely plays a direct catalytic role in this reaction. This Chlamydia caviae (strain ATCC VR-813 / DSM 19441 / 03DC25 / GPIC) (Chlamydophila caviae) protein is tRNA N6-adenosine threonylcarbamoyltransferase.